The primary structure comprises 388 residues: UDP-4-amino-4-deoxy-L-arabinose--oxoglutarate aminotransferase (388 aa).

N6-(pyridoxal phosphate)lysine is present on lysine 183.

It belongs to the DegT/DnrJ/EryC1 family. ArnB subfamily. As to quaternary structure, homodimer. The cofactor is pyridoxal 5'-phosphate.

The enzyme catalyses UDP-4-amino-4-deoxy-beta-L-arabinose + 2-oxoglutarate = UDP-beta-L-threo-pentopyranos-4-ulose + L-glutamate. Its pathway is nucleotide-sugar biosynthesis; UDP-4-deoxy-4-formamido-beta-L-arabinose biosynthesis; UDP-4-deoxy-4-formamido-beta-L-arabinose from UDP-alpha-D-glucuronate: step 2/3. It participates in bacterial outer membrane biogenesis; lipopolysaccharide biosynthesis. In terms of biological role, catalyzes the conversion of UDP-4-keto-arabinose (UDP-Ara4O) to UDP-4-amino-4-deoxy-L-arabinose (UDP-L-Ara4N). The modified arabinose is attached to lipid A and is required for resistance to polymyxin and cationic antimicrobial peptides. The chain is UDP-4-amino-4-deoxy-L-arabinose--oxoglutarate aminotransferase from Shewanella sediminis (strain HAW-EB3).